We begin with the raw amino-acid sequence, 145 residues long: 3-dehydroquinate dehydratase (145 aa).

Tyrosine 23 acts as the Proton acceptor in catalysis. Substrate-binding residues include asparagine 74, histidine 80, and aspartate 87. The Proton donor role is filled by histidine 100. Residues 101-102 and arginine 111 contribute to the substrate site; that span reads IS.

Belongs to the type-II 3-dehydroquinase family. Homododecamer.

The enzyme catalyses 3-dehydroquinate = 3-dehydroshikimate + H2O. The protein operates within metabolic intermediate biosynthesis; chorismate biosynthesis; chorismate from D-erythrose 4-phosphate and phosphoenolpyruvate: step 3/7. In terms of biological role, catalyzes a trans-dehydration via an enolate intermediate. The sequence is that of 3-dehydroquinate dehydratase from Dictyoglomus turgidum (strain DSM 6724 / Z-1310).